Reading from the N-terminus, the 1460-residue chain is Venom prothrombin activator omicarin-C non-catalytic subunit (1460 aa).

An N-terminal signal peptide occupies residues 1 to 30 (MGRYSVSPVPKCLLLMFLGWSGLKYYQVNA). Plastocyanin-like domains follow at residues 32–196 (QLRE…LLIC), 206–330 (AQKF…LNIK), 351–529 (MNWE…LLVC), and 539–685 (VQNK…FLDA). F5/8 type A domains lie at 32-330 (QLRE…LNIK) and 350-685 (IMNW…FLDA). Positions 124, 139, 142, and 143 each coordinate Ca(2+). An N-linked (GlcNAc...) asparagine glycan is attached at Asn-156. Cys-170 and Cys-196 are oxidised to a cystine. N-linked (GlcNAc...) asparagine glycans are attached at residues Asn-242, Asn-300, Asn-385, Asn-406, and Asn-471. Cysteines 251 and 332 form a disulfide. Cysteines 503 and 529 form a disulfide. N-linked (GlcNAc...) asparagine glycosylation occurs at Asn-557. 4 cysteine pairs are disulfide-bonded: Cys-672–Cys-1031, Cys-965–Cys-991, Cys-1147–Cys-1298, and Cys-1303–Cys-1457. Residues 693 to 817 (GNEEEEEDDG…SDDIAGRYLR (125 aa)) are b. Positions 740–760 (LLDDEDNPEQSRSEQTEDDEE) are disordered. A propeptide spans 772 to 817 (SFKGSVAEEELKHTALALEEDAHASDPRIDSNSARNSDDIAGRYLR) (activation peptide (connecting region)). Plastocyanin-like domains are found at residues 823–991 (NKRR…ILIC) and 1000–1143 (NRTI…FTVI). An F5/8 type A 3 domain is found at 823–1143 (NKRRYYIAAE…RGMQALFTVI (321 aa)). Ca(2+) contacts are provided by Lys-919, Phe-934, Asp-937, and Asp-938. Residue Asn-943 is glycosylated (N-linked (GlcNAc...) asparagine). Asn-1000, Asn-1180, and Asn-1397 each carry an N-linked (GlcNAc...) asparagine glycan. F5/8 type C domains follow at residues 1147-1298 (CKLP…LLGC) and 1303-1457 (CSVP…LFGC).

Belongs to the multicopper oxidase family. Heterodimer of a light and a heavy chains; non-disulfide-linked. The interaction between the two chains is calcium-dependent. Found in its active form associated with omicarin-C catalytic subunit (AC Q58L95). Post-translationally, in physiological conditions, blood coagulation factor V and factor Va are inactivated by activated protein C (APC) through proteolytic degradation of the heavy chain. However, omicarin-C non-catalytic subunit (factor V-like protein) retains its full activity even at high concentration of APC. This has two explanations: this protein has only one of the three cleavage sites present in factor V that are targeted by the APC for inactivation, and the binding with the catalytic subunit protect the cleavage site from inactivation. As to expression, expressed by the venom gland.

Its subcellular location is the secreted. Functionally, snake prothrombin activator that attacks the hemostatic system of prey. This non-catalytic subunit is functionally similar to blood coagulation factor V. It serves as a critical cofactor for the prothrombinase activity of the catalytic subunit, which is similar to the blood coagulation factor X. The complex converts prothrombin to thrombin by sequential cleavage at two positions, Arg-320 followed by Arg-271. Cleavage at Arg-320 produces an active intermediate known as meizothrombin. Meizothrombin is the 'second' substrate for prothrombinase, and it docks in an altered manner to present the second cleavage site (271). Cleavage at Arg-271 releases active thrombin from its pro-fragment. This order of events is reversed if the protease component of prothrombinase is used on its own, suggesting that the 271 site is inherently more accessible to proteolysis. The protein is Venom prothrombin activator omicarin-C non-catalytic subunit of Oxyuranus microlepidotus (Inland taipan).